Reading from the N-terminus, the 759-residue chain is Subtilisin-like serine-protease S (759 aa).

A signal peptide spans 1–22; sequence MGSAKILSFTLLLFVGYTLVHG. The Inhibitor I9 domain occupies 28-105; it reads YIVYMGDRSH…SVFESKMNKL (78 aa). Residues 110–613 enclose the Peptidase S8 domain; sequence SWDFLGLDTV…SGHVNPVASL (504 aa). Catalysis depends on Asp-139, which acts as the Charge relay system. Asn-170 is a glycosylation site (N-linked (GlcNAc...) asparagine). His-215 serves as the catalytic Charge relay system. Asn-230 and Asn-388 each carry an N-linked (GlcNAc...) asparagine glycan. Residues 390-462 form the PA domain; that stretch reads SFCKEHTLDP…MIGQDAVEEL (73 aa). The active-site Charge relay system is Ser-545. Asn-593, Asn-642, and Asn-671 each carry an N-linked (GlcNAc...) asparagine glycan.

Belongs to the peptidase S8 family.

It is found in the secreted. It localises to the extracellular space. The protein resides in the apoplast. Its function is as follows. Required for arbuscular mycorrhiza (AM) development during AM symbiosis with AM fungi (e.g. Glomeromycota intraradices). In Lotus japonicus (Lotus corniculatus var. japonicus), this protein is Subtilisin-like serine-protease S.